The following is a 502-amino-acid chain: Tyrosine-protein kinase receptor old-1 (502 aa).

A signal peptide spans 1–19 (MKGTLIFVVFYSSYGFAHC). At 20-58 (NTILRSSSLSRNFEDSLRRIPRSTDKDETGFEDSNVQEV) the chain is on the extracellular side. The chain crosses the membrane as a helical span at residues 59-79 (IFILLYCLFVALAILICGLII). The Cytoplasmic segment spans residues 80-502 (FYNSRKRELR…WLSDEKHCDS (423 aa)). The interval 99-140 (LLEPTSADHKRRNSSNIVPPEPTPYPITSGESDLRQTPSRLS) is disordered. Residues 127–140 (SGESDLRQTPSRLS) show a composition bias toward polar residues. Residues 175–473 (ISKGRPLGSG…ELKTTSNEYF (299 aa)) form the Protein kinase domain. ATP-binding positions include 181–189 (LGSGEFGII) and Lys-213. The active-site Proton acceptor is Asp-321.

The protein belongs to the protein kinase superfamily. Tyr protein kinase family.

It localises to the cell membrane. The enzyme catalyses L-tyrosyl-[protein] + ATP = O-phospho-L-tyrosyl-[protein] + ADP + H(+). In terms of biological role, receptor tyrosine kinase which plays a role in promoting longevity and resistance to stresses including UV irradiation and high temperatures, probably downstream of daf-16. The polypeptide is Tyrosine-protein kinase receptor old-1 (Caenorhabditis elegans).